The sequence spans 188 residues: Trafficking protein particle complex subunit 5 (188 aa).

Belongs to the TRAPP small subunits family. BET3 subfamily. As to quaternary structure, part of the multisubunit TRAPP (transport protein particle) complex.

The protein resides in the golgi apparatus. It localises to the cis-Golgi network. Its subcellular location is the endoplasmic reticulum. In terms of biological role, may play a role in vesicular transport from endoplasmic reticulum to Golgi. The chain is Trafficking protein particle complex subunit 5 (TRAPPC5) from Gallus gallus (Chicken).